Consider the following 164-residue polypeptide: Axial regulator YABBY 5 (164 aa).

Residues 16-43 form a C4-type zinc finger; the sequence is CNFCNIILAVNVPCSSLFDIVTVRCGHC.

This sequence belongs to the YABBY family. Binds to LUG and LUH; these complexes promote adaxial cell identity in leaves as well as embryonic shoot apical meristem (SAM) initiation and postembryonic SAM maintenance. Interacts with SPL/NZZ and SPEAR2.

The protein localises to the nucleus. In terms of biological role, promotes adaxial cell identity. Regulates the initiation of embryonic shoot apical meristem (SAM) development. In Arabidopsis thaliana (Mouse-ear cress), this protein is Axial regulator YABBY 5 (YAB5).